A 599-amino-acid chain; its full sequence is Aspartate--tRNA(Asp/Asn) ligase (599 aa).

Glu169 contributes to the L-aspartate binding site. The tract at residues 193–196 (QLFK) is aspartate. Arg215 provides a ligand contact to L-aspartate. ATP-binding positions include 215 to 217 (RDE) and Gln224. Residue His447 participates in L-aspartate binding. Residue Glu481 participates in ATP binding. Arg488 lines the L-aspartate pocket. 533-536 (GWDR) lines the ATP pocket.

The protein belongs to the class-II aminoacyl-tRNA synthetase family. Type 1 subfamily. Homodimer.

The protein localises to the cytoplasm. It carries out the reaction tRNA(Asx) + L-aspartate + ATP = L-aspartyl-tRNA(Asx) + AMP + diphosphate. Functionally, aspartyl-tRNA synthetase with relaxed tRNA specificity since it is able to aspartylate not only its cognate tRNA(Asp) but also tRNA(Asn). Reaction proceeds in two steps: L-aspartate is first activated by ATP to form Asp-AMP and then transferred to the acceptor end of tRNA(Asp/Asn). The protein is Aspartate--tRNA(Asp/Asn) ligase of Pseudarthrobacter chlorophenolicus (strain ATCC 700700 / DSM 12829 / CIP 107037 / JCM 12360 / KCTC 9906 / NCIMB 13794 / A6) (Arthrobacter chlorophenolicus).